The following is a 391-amino-acid chain: Phosphoglycerate kinase (391 aa).

Residues 21–23, R36, 59–62, R113, and R146 each bind substrate; these read DLN and HLGR. ATP is bound by residues K197, E319, and 345-348; that span reads GGDT.

Belongs to the phosphoglycerate kinase family. In terms of assembly, monomer.

It is found in the cytoplasm. The catalysed reaction is (2R)-3-phosphoglycerate + ATP = (2R)-3-phospho-glyceroyl phosphate + ADP. Its pathway is carbohydrate degradation; glycolysis; pyruvate from D-glyceraldehyde 3-phosphate: step 2/5. This Shewanella baltica (strain OS195) protein is Phosphoglycerate kinase.